We begin with the raw amino-acid sequence, 344 residues long: MSQHSNYQMTTASDYYSTKPVLSAIRSHKLISSVFEGKCPSDYESAWSPTSPLDFRLFSTLGNPFAASSSRSIWRGKQRSWDSGKVGLSIVHSLVDDHHTDSSATIVLPSPDSKNIIFGSLMRSGQKPHLLSQPFTKALMPKDVIPNAVFEIGHDVIDVLELRKSGSVDAAYCSGAENFSVNNNACQVTKQDPGSLNGGTESDMEISEDYTCVISHGPNPKTTHFYGDQVMESVEREELKNRCCKNEKESIFAVAPLDLTTPVDVLPPKDFLSFCYGCSKKLGMGEDIYMYSGYKAFCSSECRSKEIDLDEEMEDGDEEEAIKSVSSSDKESKKKSNGVFFTVG.

Residues aspartate 270–glutamate 314 form an FLZ-type zinc finger. The span at leucine 309 to glutamate 320 shows a compositional bias: acidic residues. The tract at residues leucine 309–glycine 344 is disordered.

Belongs to the FLZ family. In terms of assembly, interacts with KIN10 and KIN11 via its FLZ-type zinc finger domain. Interacts with KINB1, KINB2 and KINB3 via its N-terminal part. Forms homodimer and heterodimer with FLZ2 and FLZ12 in vitro. In terms of tissue distribution, early expressed in hypocotyl and cotyledon and preferentially in the stelar region of the shoot and root. Later expressed in root-shoot junction, lateral root, old or senescing leaves and in pistil and pollen of flower buds or open flowers.

It localises to the cytoplasm. Its subcellular location is the nucleus. The protein resides in the endoplasmic reticulum. In terms of biological role, may act as an adapter to facilitate the interaction of SnRK1 complex with effector proteins, conferring tissue- and stimulus-type specific differences in the SnRK1 regulation pathway. Negatively regulates KIN10 leading to a repression of the SnRK1 signaling pathway. The protein is FCS-Like Zinc finger 10 of Arabidopsis thaliana (Mouse-ear cress).